The primary structure comprises 197 residues: GTP cyclohydrolase-2 (197 aa).

49–53 (RVHSE) contributes to the GTP binding site. 3 residues coordinate Zn(2+): cysteine 54, cysteine 65, and cysteine 67. GTP contacts are provided by residues glutamine 70, 92-94 (EGR), and threonine 114. Residue aspartate 126 is the Proton acceptor of the active site. Arginine 128 serves as the catalytic Nucleophile. Threonine 149 and lysine 154 together coordinate GTP.

Belongs to the GTP cyclohydrolase II family. As to quaternary structure, homodimer. Zn(2+) serves as cofactor.

The catalysed reaction is GTP + 4 H2O = 2,5-diamino-6-hydroxy-4-(5-phosphoribosylamino)-pyrimidine + formate + 2 phosphate + 3 H(+). It functions in the pathway cofactor biosynthesis; riboflavin biosynthesis; 5-amino-6-(D-ribitylamino)uracil from GTP: step 1/4. Catalyzes the conversion of GTP to 2,5-diamino-6-ribosylamino-4(3H)-pyrimidinone 5'-phosphate (DARP), formate and pyrophosphate. The sequence is that of GTP cyclohydrolase-2 from Pectobacterium atrosepticum (strain SCRI 1043 / ATCC BAA-672) (Erwinia carotovora subsp. atroseptica).